A 339-amino-acid polypeptide reads, in one-letter code: Thermospermine synthase ACAULIS5 (339 aa).

In terms of domain architecture, PABS spans 33–270 (CHWYEETIDD…DTWGWVMASD (238 aa)). Residues glutamine 62, glutamate 117, aspartate 137, and 168 to 169 (DA) each bind S-adenosyl 3-(methylsulfanyl)propylamine. Aspartate 186 (proton acceptor) is an active-site residue.

It belongs to the spermidine/spermine synthase family. In terms of tissue distribution, highly expressed in stem internodes and roots. Lower levels in young seedlings before flowering and rosette leaves. Expressed in the vascular tissues. Restricted to procambial and/or provascular cells during primary root development and early leaves development.

It catalyses the reaction S-adenosyl 3-(methylsulfanyl)propylamine + spermidine = thermospermine + S-methyl-5'-thioadenosine + H(+). Functionally, required for correct xylem specification through regulation of the lifetime of the xylem elements. Prevents premature death of the xylem vessel elements. The polypeptide is Thermospermine synthase ACAULIS5 (ACL5) (Arabidopsis thaliana (Mouse-ear cress)).